We begin with the raw amino-acid sequence, 844 residues long: DNA mismatch repair protein MutS (844 aa).

610-617 (GPNMGGKS) contributes to the ATP binding site.

The protein belongs to the DNA mismatch repair MutS family.

Its function is as follows. This protein is involved in the repair of mismatches in DNA. It is possible that it carries out the mismatch recognition step. This protein has a weak ATPase activity. This chain is DNA mismatch repair protein MutS, found in Francisella tularensis subsp. holarctica (strain FTNF002-00 / FTA).